We begin with the raw amino-acid sequence, 450 residues long: Signal recognition particle 54 kDa protein (450 aa).

GTP is bound by residues 107–114 (GIQGSGKT), 188–192 (DTAGR), and 247–250 (TKLD).

It belongs to the GTP-binding SRP family. SRP54 subfamily. As to quaternary structure, part of the signal recognition particle protein translocation system, which is composed of SRP and FtsY. Archaeal SRP consists of a 7S RNA molecule of 300 nucleotides and two protein subunits: SRP54 and SRP19.

Its subcellular location is the cytoplasm. It carries out the reaction GTP + H2O = GDP + phosphate + H(+). Functionally, involved in targeting and insertion of nascent membrane proteins into the cytoplasmic membrane. Binds to the hydrophobic signal sequence of the ribosome-nascent chain (RNC) as it emerges from the ribosomes. The SRP-RNC complex is then targeted to the cytoplasmic membrane where it interacts with the SRP receptor FtsY. This Methanococcus maripaludis (strain C5 / ATCC BAA-1333) protein is Signal recognition particle 54 kDa protein.